A 304-amino-acid polypeptide reads, in one-letter code: Splicing factor U2af small subunit B (304 aa).

The segment at 12-40 (EKDRVNCPFYFKIGACRHGDRCSRLHNRP) adopts a C3H1-type 1 zinc-finger fold. The region spanning 44–146 (PTIVLANMYQ…RPIIVEYSPV (103 aa)) is the RRM domain. Residues 148–175 (DFREATCRQFEENSCNRGGYCNFMHVKQ) form a C3H1-type 2 zinc finger. A compositionally biased stretch (basic residues) spans 184 to 207 (LYGGRSRRSHGRSRSPSPRHRRGN). A disordered region spans residues 184–304 (LYGGRSRRSH…QWNREREEKP (121 aa)). Over residues 208 to 220 (RDRDDFRRERDGY) the composition is skewed to basic and acidic residues. Residues 221-258 (RGGGDGYRGGGGGGGGDGYRGGDSYRGGGGGGRRGGGS) are compositionally biased toward gly residues. Positions 268 to 280 (RRRHGSPPRRARS) are enriched in basic residues. A compositionally biased stretch (basic and acidic residues) spans 281-304 (PVRESSEERRAKIEQWNREREEKP).

Belongs to the splicing factor SR family.

It localises to the nucleus. Necessary for the splicing of pre-mRNA. The sequence is that of Splicing factor U2af small subunit B (U2AF35B) from Oryza sativa subsp. japonica (Rice).